Consider the following 86-residue polypeptide: UPF0125 protein bbp_234 (86 aa).

The protein belongs to the UPF0125 (RnfH) family.

In Buchnera aphidicola subsp. Baizongia pistaciae (strain Bp), this protein is UPF0125 protein bbp_234.